Consider the following 95-residue polypeptide: Protein TusB (95 aa).

This sequence belongs to the DsrH/TusB family. In terms of assembly, heterohexamer, formed by a dimer of trimers. The hexameric TusBCD complex contains 2 copies each of TusB, TusC and TusD. The TusBCD complex interacts with TusE.

Its subcellular location is the cytoplasm. Part of a sulfur-relay system required for 2-thiolation of 5-methylaminomethyl-2-thiouridine (mnm(5)s(2)U) at tRNA wobble positions. The polypeptide is Protein TusB (Enterobacter sp. (strain 638)).